A 196-amino-acid chain; its full sequence is SAGA-associated factor 11 homolog (196 aa).

Residues 1 to 22 (MSAANMPTTTGAQGSGNQVPTT) form a disordered region. Residues 106 to 127 (CTCPNCDRLVAAARFAPHLEKC) form an SGF11-type zinc finger. The disordered stretch occupies residues 144 to 196 (TKEGATSAHLHSAGNTGGTDDEDDVDWSSDKRRKKSNQNSRNNGSKKNNGKSF). Phosphoserine is present on Ser172. Low complexity predominate over residues 180 to 196 (NQNSRNNGSKKNNGKSF).

It belongs to the SGF11 family. In terms of assembly, component of some SAGA transcription coactivator-HAT complexes, at least composed of Ada2b, not/nonstop, Pcaf/Gcn5, Sgf11 and Spt3. Within the SAGA complex, Sgf11, e(y)2, and not/nonstop form an additional subcomplex of SAGA called the DUB module (deubiquitination module). Interacts directly with not/nonstop. Interacts with the AMEX complex component xmas-2. Interacts with Cbp80; important for promoter recruitment of Sgf11 that is not associated with the DUB module.

It localises to the nucleus. The protein localises to the nucleoplasm. Its subcellular location is the cytoplasm. Its function is as follows. Component of the transcription regulatory histone acetylation (HAT) complex SAGA, a multiprotein complex that activates transcription by remodeling chromatin and mediating histone acetylation and deubiquitination. Within the SAGA complex, participates in a subcomplex that specifically deubiquitinates histone H2B. The SAGA complex is recruited to specific gene promoters by activators, where it is required for transcription. Required for nuclear receptor-mediated transactivation. Binds independently on SAGA to promoters in an RNA-dependent manner. Binds to mRNA and is essential for total mRNA export from the nucleus. Required to counteract heterochromatin silencing. Controls the development of neuronal connectivity in visual system by being required for accurate axon targeting in the optic lobe. Required for expression of ecdysone-induced genes such as br/broad. This Drosophila erecta (Fruit fly) protein is SAGA-associated factor 11 homolog.